Here is a 201-residue protein sequence, read N- to C-terminus: Lipoprotein signal peptidase (201 aa).

3 helical membrane passes run 33-53 (LLLS…VLAV), 86-106 (GYTW…FWMG), and 110-130 (VSSW…GNLV). Catalysis depends on residues Asp-146 and Asp-160. The helical transmembrane segment at 158–178 (VADPSVVVGAILLVVLSIFGF) threads the bilayer.

The protein belongs to the peptidase A8 family.

It is found in the cell membrane. It catalyses the reaction Release of signal peptides from bacterial membrane prolipoproteins. Hydrolyzes -Xaa-Yaa-Zaa-|-(S,diacylglyceryl)Cys-, in which Xaa is hydrophobic (preferably Leu), and Yaa (Ala or Ser) and Zaa (Gly or Ala) have small, neutral side chains.. It functions in the pathway protein modification; lipoprotein biosynthesis (signal peptide cleavage). Its function is as follows. This protein specifically catalyzes the removal of signal peptides from prolipoproteins. This chain is Lipoprotein signal peptidase, found in Mycobacterium leprae (strain Br4923).